Consider the following 380-residue polypeptide: Apelin receptor (380 aa).

The Extracellular portion of the chain corresponds to 1-30 (MEEGGDFDNYYGADNQSECEYTDWKSSGAL). The N-linked (GlcNAc...) asparagine glycan is linked to Asn-15. 2 cysteine pairs are disulfide-bonded: Cys-19–Cys-281 and Cys-102–Cys-181. Residues 31–54 (IPAIYMLVFLLGTTGNGLVLWTVF) form a helical membrane-spanning segment. Over 55–64 (RSSREKRRSA) the chain is Cytoplasmic. Residues 65-86 (DIFIASLAVADLTFVVTLPLWA) form a helical membrane-spanning segment. Residues 87–99 (TYTYRDYDWPFGT) are Extracellular-facing. Residues 100-125 (FFCKLSSYLIFVNMYASVFCLTGLSF) form a helical membrane-spanning segment. At 126–146 (DRYLAIVRPVANARLRLRVSG) the chain is on the cytoplasmic side. Residues 147 to 164 (AVATAVLWVLAALLAMPV) form a helical membrane-spanning segment. At 165 to 198 (MVLRTTGDLENTTKVQCYMDYSMVATVSSEWAWE) the chain is on the extracellular side. Residue Asn-175 is glycosylated (N-linked (GlcNAc...) asparagine). The chain crosses the membrane as a helical span at residues 199–223 (VGLGVSSTTVGFVVPFTIMLTCYFF). Residues 224–246 (IAQTIAGHFRKERIEGLRKRRRL) lie on the Cytoplasmic side of the membrane. Residues 247-270 (LSIIVVLVVTFALCWMPYHLVKTL) form a helical membrane-spanning segment. The Extracellular portion of the chain corresponds to 271 to 289 (YMLGSLLHWPCDFDLFLMN). The helical transmembrane segment at 290 to 312 (IFPYCTCISYVNSCLNPFLYAFF) threads the bilayer. Residues 313–380 (DPRFRQACTS…PYSQETLVVD (68 aa)) are Cytoplasmic-facing. Residues 342 to 351 (KSASYSSGHS) are compositionally biased toward low complexity. The tract at residues 342–380 (KSASYSSGHSQGPGPNMGKGGEQMHEKSIPYSQETLVVD) is disordered. Residues 371–380 (PYSQETLVVD) are compositionally biased toward polar residues.

Belongs to the G-protein coupled receptor 1 family. As to quaternary structure, homodimer; dimerization inhibits APLNR-mediated G protein and beta-arrestin signaling pathways compared to monomeric APLNR. As to expression, expressed in heart, brain, kidney, stomach, spleen, thymus, lung, ovary, small intestine and colon, adipose tissues and pancreas. Expressed in glial cells, astrocytes and neuronal subpopulations. Expressed in embryonic (ESCs) and induced (iPSCs) pluripotent stem cells.

The protein localises to the cell membrane. G protein-coupled receptor for peptide hormones apelin (APLN) and apelin receptor early endogenous ligand (APELA/ELA), that plays a role in the regulation of normal cardiovascular function and fluid homeostasis. When acting as apelin receptor, activates both G(i) protein pathway that inhibits adenylate cyclase activity, and the beta-arrestin pathway that promotes internalization of the receptor. APLNR/APJ also functions as mechanoreceptor that is activated by pathological stimuli in a G-protein-independent fashion to induce beta-arrestin signaling, hence eliciting cardiac hypertrophy. However, the presence of apelin ligand blunts cardiac hypertrophic induction from APLNR/APJ on response to pathological stimuli. Plays a key role in early development such as gastrulation, blood vessels formation and heart morphogenesis by acting as a APELA receptor. May promote angioblast migration toward the embryonic midline, i.e. the position of the future vessel formation, during vasculogenesis. Promotes sinus venosus (SV)-derived endothelial cells migration into the developing heart to promote coronary blood vessel development. Also plays a role in various processes in adults such as regulation of blood vessel formation, blood pressure, heart contractility and heart failure. Functionally, (Microbial infection) Alternative coreceptor with CD4 for HIV-1 infection; may be involved in the development of AIDS dementia. This chain is Apelin receptor, found in Homo sapiens (Human).